The sequence spans 224 residues: Urease accessory protein UreF (224 aa).

Belongs to the UreF family. UreD, UreF and UreG form a complex that acts as a GTP-hydrolysis-dependent molecular chaperone, activating the urease apoprotein by helping to assemble the nickel containing metallocenter of UreC. The UreE protein probably delivers the nickel.

It localises to the cytoplasm. Functionally, required for maturation of urease via the functional incorporation of the urease nickel metallocenter. The sequence is that of Urease accessory protein UreF from Pseudomonas putida (strain W619).